The chain runs to 240 residues: Insulin-like growth factor-binding protein 6 (240 aa).

Residues 1–27 (MTPHRLLPPLLLLLALLLAASPGGALA) form the signal peptide. In terms of domain architecture, IGFBP N-terminal spans 28–107 (RCPGCGQGVQ…LLGRGRCLPA (80 aa)). 5 disulfide bridges follow: C29/C32, C40/C44, C57/C63, C71/C84, and C78/C104. The segment at 109–160 (APAVAEENPKESKPQAGTARPQDVNRRDQQRNPGTSTTPSQPNSAGVQDTEM) is disordered. Residue T126 is glycosylated (O-linked (HexNAc...) threonine). Positions 139 to 155 (RNPGTSTTPSQPNSAGV) are enriched in polar residues. The O-linked (HexNAc...) serine glycan is linked to S144. O-linked (HexNAc...) threonine glycans are attached at residues T145 and T146. Residue S152 is glycosylated (O-linked (HexNAc...) serine). One can recognise a Thyroglobulin type-1 domain in the interval 160 to 234 (MGPCRRHLDS…SPDGNGSSSC (75 aa)). Intrachain disulfides connect C163/C190, C201/C212, and C214/C234. Positions 217–240 (RMGKSLPGSPDGNGSSSCPTGSSG) are disordered. Residues 228–240 (GNGSSSCPTGSSG) show a composition bias toward polar residues.

Interacts (via C-terminal domain) with PHB2. O-linked glycans consist of hexose (probably Gal), N-acetylhexosamine (probably GalNAc) and sialic acid residues. O-glycosylated with core 1 or possibly core 8 glycans. O-glycosylated on one site only in the region AA 143-168 in cerebrospinal fluid.

The protein localises to the secreted. Its function is as follows. IGF-binding proteins prolong the half-life of the IGFs and have been shown to either inhibit or stimulate the growth promoting effects of the IGFs on cell culture. They alter the interaction of IGFs with their cell surface receptors. Activates the MAPK signaling pathway and induces cell migration. This is Insulin-like growth factor-binding protein 6 from Homo sapiens (Human).